Consider the following 471-residue polypeptide: MSNAKTLYEKIYDAHVAVAAEGENPILYIDRHLVHEVTSPQAFDGLREKGRKIRQVGKTFATMDHNVSTQTKDINASGEMARIQMETLSKNCEEFGVTLYDLNHKYQGIVHVMGPELGITLPGMTIVCGDSHTATHGAFGSLAFGIGTSEVEHVLATQTLKQARAKTMKIDVKGKVAEGITAKDIVLAIIGKTTAAGGTGYVVEFCGEAITDLTMEGRMTVCNMAIELGAKAGLIAPDQTTFDYIAGRKFSPQGADLDAAIEYWSSLKTDDDAEFDAVVTLDASEIKPQVTWGTNPGQVIAVDAPIPAPESFADPVEKASAEKALAYMGLEAGKSLSDYNVDKVFVGSCTNSRIEDMRAAAAIAKGRKVASHVQALIVPGSEQVKAQAEKEGLDVIFKEAGFEWRLPGCSMCLAMNNDRLGPHERCASTSNRNFEGRQGRDGRTHLVSPAMAAAAAIAGHFVDIRTITEQA.

[4Fe-4S] cluster is bound by residues C349, C409, and C412.

This sequence belongs to the aconitase/IPM isomerase family. LeuC type 1 subfamily. Heterodimer of LeuC and LeuD. Requires [4Fe-4S] cluster as cofactor.

The enzyme catalyses (2R,3S)-3-isopropylmalate = (2S)-2-isopropylmalate. Its pathway is amino-acid biosynthesis; L-leucine biosynthesis; L-leucine from 3-methyl-2-oxobutanoate: step 2/4. Functionally, catalyzes the isomerization between 2-isopropylmalate and 3-isopropylmalate, via the formation of 2-isopropylmaleate. This Aliivibrio fischeri (strain MJ11) (Vibrio fischeri) protein is 3-isopropylmalate dehydratase large subunit.